A 272-amino-acid chain; its full sequence is Expansin-B16 (272 aa).

Residues 1 to 25 (MAAFSSSSSAPMLIRSVLFVSLLSA) form the signal peptide. The 111-residue stretch at 63 to 173 (GGACGYGTLV…RRTACKYGGK (111 aa)) folds into the Expansin-like EG45 domain. Intrachain disulfides connect C66-C95, C98-C168, and C103-C109. Residues 186 to 267 (FWLSLLVEFE…NWTPKATYTS (82 aa)) enclose the Expansin-like CBD domain.

It belongs to the expansin family. Expansin B subfamily.

Its subcellular location is the secreted. The protein localises to the cell wall. It is found in the membrane. Functionally, may cause loosening and extension of plant cell walls by disrupting non-covalent bonding between cellulose microfibrils and matrix glucans. No enzymatic activity has been found. May be required for rapid internodal elongation in deepwater rice during submergence. The sequence is that of Expansin-B16 (EXPB16) from Oryza sativa subsp. japonica (Rice).